A 98-amino-acid polypeptide reads, in one-letter code: NADH-ubiquinone oxidoreductase chain 4L (98 aa).

3 helical membrane passes run 1-21 (MSLT…GLLM), 29-49 (SLLC…MAIL), and 61-81 (IILL…LVMV).

The protein belongs to the complex I subunit 4L family. Core subunit of respiratory chain NADH dehydrogenase (Complex I) which is composed of 45 different subunits.

Its subcellular location is the mitochondrion inner membrane. It carries out the reaction a ubiquinone + NADH + 5 H(+)(in) = a ubiquinol + NAD(+) + 4 H(+)(out). Core subunit of the mitochondrial membrane respiratory chain NADH dehydrogenase (Complex I) which catalyzes electron transfer from NADH through the respiratory chain, using ubiquinone as an electron acceptor. Part of the enzyme membrane arm which is embedded in the lipid bilayer and involved in proton translocation. The polypeptide is NADH-ubiquinone oxidoreductase chain 4L (MT-ND4L) (Vampyressa melissa (Melissa's yellow-eared bat)).